The following is a 224-amino-acid chain: uncharacterized protein (224 aa).

An N-terminal signal peptide occupies residues M1 to A16.

This is an uncharacterized protein from Escherichia coli.